A 402-amino-acid chain; its full sequence is Phosphoglycerate kinase (402 aa).

Substrate contacts are provided by residues 29 to 31 (DFN), Arg-45, 69 to 72 (HLGR), Arg-125, and Arg-158. ATP is bound by residues Lys-209, Glu-331, and 357–360 (GGDT).

This sequence belongs to the phosphoglycerate kinase family.

It localises to the cytoplasm. The enzyme catalyses (2R)-3-phosphoglycerate + ATP = (2R)-3-phospho-glyceroyl phosphate + ADP. The protein operates within carbohydrate degradation; glycolysis; pyruvate from D-glyceraldehyde 3-phosphate: step 2/5. This is Phosphoglycerate kinase (pgk) from Helicobacter pylori (strain ATCC 700392 / 26695) (Campylobacter pylori).